The following is a 605-amino-acid chain: Zinc metalloproteinase-disintegrin-like BfMP (605 aa).

The first 11 residues, 1–11, serve as a signal peptide directing secretion; sequence MLVVFPYQGSS. Positions 12-179 are excised as a propeptide; it reads IILESGNVND…WESDEPFKNT (168 aa). N-linked (GlcNAc...) asparagine glycans are attached at residues asparagine 178 and asparagine 215. The Peptidase M12B domain maps to 196-392; sequence KYIEFYVAVD…DRPQCILNKP (197 aa). 17 disulfide bridges follow: cysteine 307–cysteine 387, cysteine 347–cysteine 371, cysteine 350–cysteine 355, cysteine 403–cysteine 432, cysteine 414–cysteine 427, cysteine 416–cysteine 422, cysteine 426–cysteine 449, cysteine 440–cysteine 446, cysteine 445–cysteine 471, cysteine 458–cysteine 478, cysteine 465–cysteine 497, cysteine 490–cysteine 502, cysteine 509–cysteine 559, cysteine 524–cysteine 567, cysteine 537–cysteine 547, cysteine 554–cysteine 593, and cysteine 587–cysteine 598. Zn(2+) is bound at residue histidine 332. Residue glutamate 333 is part of the active site. Zn(2+)-binding residues include histidine 336 and histidine 342. Positions 400 to 486 constitute a Disintegrin domain; it reads PAICGNYFVE…ECPTDIFRRN (87 aa). The D/ECD-tripeptide signature appears at 464–466; it reads DCD.

Belongs to the venom metalloproteinase (M12B) family. P-III subfamily. P-IIIa sub-subfamily. Monomer. Requires Zn(2+) as cofactor. In terms of tissue distribution, expressed by the venom gland.

It is found in the secreted. Its function is as follows. Snake venom zinc metalloproteinase that inhibits platelet aggregation and degrades fibrinogen. This chain is Zinc metalloproteinase-disintegrin-like BfMP, found in Bungarus fasciatus (Banded krait).